The primary structure comprises 280 residues: uncharacterized protein (280 aa).

Residues 1 to 78 (MDVIQRIKEK…VLLAQSISRA (78 aa)) form the HTH rpiR-type domain. Positions 37-57 (ISDLSEKAGVKSEASVVKFYK) form a DNA-binding region, H-T-H motif. An SIS domain is found at 123–263 (TVDLFKNAQR…YTLLAARDPR (141 aa)).

This is an uncharacterized protein from Thermotoga maritima (strain ATCC 43589 / DSM 3109 / JCM 10099 / NBRC 100826 / MSB8).